An 853-amino-acid polypeptide reads, in one-letter code: Transcription factor CPH2 (853 aa).

Disordered stretches follow at residues 165-209 (EPPI…DKNS) and 296-353 (NMNP…VHHP). Low complexity predominate over residues 180–194 (TTTVSSTNSITNTTK). One can recognise a bHLH domain in the interval 205–274 (KDKNSHNMIE…TKATEYIKHL (70 aa)). The segment covering 301–315 (SLPPPPQQMQAPPQP) has biased composition (pro residues). Low complexity predominate over residues 330–352 (TPASQYPSPQQQVSPTQQQTVHH).

The protein localises to the nucleus. Transcription factor that positively controls filamentous growth, virulence, and invasiveness. Binds directly to the two SRE-1-like elements upstream of TEC1 and thus positively regulates expression of this important hyphal growth regulator. Functions independently of known signaling cascades involving EFG1. Also regulates gene expression during intestinal colonization but is not involved in host cell adhesion. This is Transcription factor CPH2 (CPH2) from Candida albicans (strain SC5314 / ATCC MYA-2876) (Yeast).